The sequence spans 157 residues: Probable succinate transporter subunit YjjB (157 aa).

Transmembrane regions (helical) follow at residues 2–22, 55–75, 87–107, and 129–149; these read GIIS…IPAV, AGFN…SIGI, IFTV…TAMI, and FLKA…PGLW.

Belongs to the ThrE exporter (TC 2.A.79) family. In terms of assembly, the transporter is composed of YjjB and YjjP.

It localises to the cell inner membrane. Its function is as follows. Involved in succinate export with YjjP. Both proteins are required for export. The polypeptide is Probable succinate transporter subunit YjjB (Klebsiella pneumoniae subsp. pneumoniae (strain ATCC 700721 / MGH 78578)).